The chain runs to 348 residues: GMP reductase 2 (348 aa).

Residues 26-27 (SR), Lys-78, 129-131 (DVA), and 180-181 (IG) each bind NADP(+). Positions 181, 183, and 186 each coordinate K(+). The active-site Thioimidate intermediate is the Cys-186. Thr-188 functions as the Proton donor/acceptor in the catalytic mechanism. Arg-189 contacts K(+). Residues 219 to 221 (DGG), 242 to 243 (GG), 268 to 270 (GMS), and 286 to 290 (RASEG) contribute to the GMP site. NADP(+) is bound by residues Met-269 and 285–286 (YR). N6-acetyllysine is present on Lys-291. Position 314–317 (314–317 (STCT)) interacts with NADP(+).

The protein belongs to the IMPDH/GMPR family. GuaC type 1 subfamily. As to quaternary structure, homotetramer.

It catalyses the reaction IMP + NH4(+) + NADP(+) = GMP + NADPH + 2 H(+). Catalyzes the irreversible NADPH-dependent deamination of GMP to IMP. It functions in the conversion of nucleobase, nucleoside and nucleotide derivatives of G to A nucleotides, and in maintaining the intracellular balance of A and G nucleotides. Plays a role in modulating cellular differentiation. The sequence is that of GMP reductase 2 from Bos taurus (Bovine).